Here is a 1910-residue protein sequence, read N- to C-terminus: MMKLKEMVEAAEAKVESKPPQAAEEKAPDQAAGGAEEDVAAAPAEGGEGAEPLDQAEIEKMLFDESLGAQEYTYEEFLDLIDQPPEERGEAEDERKHWSYPRRWKVVLWNLQIQNYMDDNFSAFMEFEFGGTREECKVHKGTSVLIYATGQDKNYLRTPVIPDVSNAGPVDMHFRKAFEYRGSYLDLEREKLKIKVWEYRNWTLNHLEAVYEEALLNLATGETHVERDLYKFIKGRRSRRCRISFHLYFQELYDFELSFVKWRLVQIMPCLTLQEKIANRGKNKGGYTREATIGFKRHQLADQAKYVFQQRQVKREMQKRDSQRELLPGASRPEMLGGFADKGSARLSHLGFESAMKLPNRGTRSPSGLESNRPEDGNRNMEEIFLQHQATILASDQLEELPASLRPPLSKRRKGEDKKDGNKADGPQVKMTISLMHASSMNKGLGLVSSERPADGIPRWDNLGEIYFRGTLRDLDSTYIQVVVEDTTAPKVMRQIGYGQIPLRGVVDYSCLSTELGTPMWLALQAKMEGWGHELKEWCFGFVEGTVMVAHLPRYRQLGEVSESDSDRVYLILRIKDVDQIVTPDNRPVVDSYVEVSFDGTSRRTRTVRNTLNPVWDDEVTIPLRLPAFRDITESDVTRKGKVWLDVWGTGPGYVDHLGGCSFSLYEIFFNEKHNKRNLTAMQRIDLEANTRQSYETRVFSTSRRLAFIHKADRPSTIQFEAWTCPDILEVSGIDKLPEPERITTTSNFPRALRNTYERLKRMYAEVIEKKGLVNPDTGVGPPRFFDVEFLDQRKETHYAPTMVTRIRPPFGVDSESSVFHYCRCVPFAVKRENLVFTPEFAVQIRSGNAMDHSILMTSLLLGLPAFAFVCVGTLWDKHMHAWVATFHYDDDRACGVVKFWETTTGLVYTLKHRFRDPYTLQRLSADPEFGILKMMNIQRRKRLSILGVSVDADTPDYISRSGEDLVQSEFPTGGAKLPYRSLDIMFNNRNVWLNIQDGNPAKVWFDIWDVEQWYQFSPGLHDVPPCFIVRGFGAKVAEWQFDRAAQEIQGKVLSDITAFRATRNLPTKWNRDDVLDAFLQMGLELLHQAATARDEDFQLARLKLEDWKKAFYSKVPCSYRVRGAPLHFNTYDSKTISDAIIANVDFVESRDRSAFFSLAVMLYNLPGELVSTYVYICVTQKVTERERRRILAQKEKQSREDAQRKARKQRRKAGHEGADNGAEDKQGAEGNEEEHGDAAAAAVAEESVSAEAVQGAEEPKKVVKKGAVPRVKKRSYEQVEGTEVAAIAIERDFFTEAEAPDFKNLMTDVEHAINTHLGLSPGRVRAFQARYAEKRIVFAVGPPMDDATEADAVSSVALMEKLRDILPSMAHEEGRFQEVTGGGATLQWDGPGTNILDRIAQEQATAGEGEQQTSEGIPTRDMQVDGTAVLEEAGEKSDKKKKKKEKKEKKEKKEKKEKKEKKEKKKKKGGETAAEPEEASAVLAPPPVPAPAAAIPSVLLPTDSEDGEKEKPKEKKKEKKEKKKKKDGETDAEPDEASAVLAPPPVPVPAAAIPSILLPADGEDGEEEKPKEKKTEKKKEKHTEKKHKKKSETLPESETTAVVTVTPGEEDETSPLVPVPSSIASSEAPEPPASTRVTPAPEPKAKPGLSMGAALLAVRARSRLQRKHLAQQLSSSSSSEVSASSASSLSPSSSSSSDFAETRAKADALRARLQAAQARLAAARETEVSSSETESSETSEASFLSSDGEWDALWQSQRAAAMERQQRLQKMVSGVKAAYRRLEEENTRLAATRRRDDKLQRQVEAERERAVELLKEATRRAKEEKDLIARQPPPARDWSDTVVLSTPQIFVNSQAACAPFADSGRDEGERDEWYEVSDACSRRAESSNESRTTAGAKLRQQQLDLAGRT.

Residues 1 to 28 show a composition bias toward basic and acidic residues; sequence MMKLKEMVEAAEAKVESKPPQAAEEKAP. Disordered stretches follow at residues 1–54, 355–377, and 398–428; these read MMKL…EPLD, AMKL…PEDG, and LEEL…DGPQ. The segment covering 414–423 has biased composition (basic and acidic residues); the sequence is KGEDKKDGNK. One can recognise a C2 domain in the interval 557-678; that stretch reads QLGEVSESDS…FFNEKHNKRN (122 aa). Basic and acidic residues-rich tracts occupy residues 1192–1205 and 1215–1228; these read LAQK…DAQR and GHEG…DKQG. Disordered regions lie at residues 1192-1267, 1405-1424, 1431-1654, 1666-1747, 1822-1841, and 1879-1910; these read LAQK…VKKG, ATAG…RDMQ, LEEA…SMGA, QRKH…FLSS, AKEE…DWSD, and DACS…AGRT. 2 stretches are compositionally biased toward low complexity: residues 1239 to 1257 and 1405 to 1414; these read AAAA…VQGA and ATAGEGEQQT. Residues 1440–1469 show a composition bias toward basic residues; the sequence is KKKKKKEKKEKKEKKEKKEKKEKKEKKKKK. Positions 1492-1502 are enriched in low complexity; it reads PAAAIPSVLLP. Basic residues predominate over residues 1517 to 1526; that stretch reads KKEKKEKKKK. The span at 1550-1561 shows a compositional bias: low complexity; that stretch reads PAAAIPSILLPA. Positions 1569-1584 are enriched in basic and acidic residues; that stretch reads EKPKEKKTEKKKEKHT. The segment covering 1595–1604 has biased composition (polar residues); sequence LPESETTAVV. Composition is skewed to low complexity over residues 1620 to 1629 and 1675 to 1698; these read VPSSIASSEA and SSSS…SSSS. The span at 1701–1711 shows a compositional bias: basic and acidic residues; it reads AETRAKADALR. Composition is skewed to low complexity over residues 1712-1722 and 1729-1747; these read ARLQAAQARLA and VSSS…FLSS. Positions 1766 to 1828 form a coiled coil; the sequence is QQRLQKMVSG…TRRAKEEKDL (63 aa). A compositionally biased stretch (polar residues) spans 1890–1904; it reads ESRTTAGAKLRQQQL.

Its subcellular location is the membrane. Its function is as follows. Regulates microneme secretion. Probably involved in regulation of rhoptry and dense granule secretion. This chain is C2 domain-containing protein, found in Toxoplasma gondii.